Consider the following 568-residue polypeptide: PWWP domain-containing protein2 (568 aa).

Residues 1 to 19 (MTEIKDSSVKDENPGKQEE) show a composition bias toward basic and acidic residues. 3 disordered regions span residues 1 to 126 (MTEI…YKPG), 213 to 340 (QSTP…DVAK), and 465 to 568 (IASL…TGQK). A compositionally biased stretch (polar residues) spans 29 to 46 (MSTATNNSKNIETTSSNG). Composition is skewed to basic and acidic residues over residues 48–88 (EDIK…KTIE) and 100–122 (KSQK…ERVN). One can recognise a PWWP domain in the interval 125–189 (PGMRVLTKMS…SDSLTPLTSE (65 aa)). Low complexity predominate over residues 214 to 228 (STPDLDSLSVPSSES). A compositionally biased stretch (acidic residues) spans 229–249 (EVSEEESDQEMSEPSPIEEDY). The span at 255–266 (RRITRKGTKKKT) shows a compositional bias: basic residues. The segment covering 281 to 292 (LNASSNVSSNPA) has biased composition (polar residues). The segment covering 325-336 (KEEEEGSVANEE) has biased composition (acidic residues). 2 stretches are compositionally biased toward basic and acidic residues: residues 489–500 (KQNEDNEDKVKA) and 514–541 (DASK…KDFA).

The chain is PWWP domain-containing protein2 (pdp2) from Schizosaccharomyces pombe (strain 972 / ATCC 24843) (Fission yeast).